Here is a 248-residue protein sequence, read N- to C-terminus: 14-3-3 protein zeta (248 aa).

The protein belongs to the 14-3-3 family. As to quaternary structure, homodimer.

It is found in the cytoplasm. In terms of biological role, adapter protein implicated in the regulation of a large spectrum of both general and specialized signaling pathways. Binds to a large number of partners, usually by recognition of a phosphoserine or phosphothreonine motif. Binding generally results in the modulation of the activity of the binding partner. The polypeptide is 14-3-3 protein zeta (14-3-3zeta) (Aedes aegypti (Yellowfever mosquito)).